We begin with the raw amino-acid sequence, 122 residues long: Protein translocase subunit SecE (122 aa).

3 helical membrane passes run 14–34, 38–58, and 93–113; these read LLKWLLVAVLVVVAVVGNQYF, PILYRVLGILVLAVIAAFLAL, and LIVVAVVLVMALLLWGLDSLL.

Belongs to the SecE/SEC61-gamma family. In terms of assembly, component of the Sec protein translocase complex. Heterotrimer consisting of SecY, SecE and SecG subunits. The heterotrimers can form oligomers, although 1 heterotrimer is thought to be able to translocate proteins. Interacts with the ribosome. Interacts with SecDF, and other proteins may be involved. Interacts with SecA.

It localises to the cell inner membrane. Its function is as follows. Essential subunit of the Sec protein translocation channel SecYEG. Clamps together the 2 halves of SecY. May contact the channel plug during translocation. This Pseudomonas aeruginosa (strain ATCC 15692 / DSM 22644 / CIP 104116 / JCM 14847 / LMG 12228 / 1C / PRS 101 / PAO1) protein is Protein translocase subunit SecE.